We begin with the raw amino-acid sequence, 704 residues long: DNA-binding protein RFX2 (704 aa).

Positions 1–39 (MQNSEGGADSPASVALRPSAAAPPVPASPQRVLVQAASS) are disordered. Over residues 10-20 (SPASVALRPSA) the composition is skewed to low complexity. Ser28 bears the Phosphoserine mark. The RFX-type winged-helix DNA-binding region spans 199 to 274 (HLQWLLDNYE…YHYYGIRLKP (76 aa)). The disordered stretch occupies residues 292 to 334 (QQPMHQKPRYRPAQKTDSLGDSSSHSGLHSTPEQTTAAQNQHH). Residues 307-334 (TDSLGDSSSHSGLHSTPEQTTAAQNQHH) are compositionally biased toward low complexity. Ser416 carries the post-translational modification Phosphoserine.

Belongs to the RFX family. As to quaternary structure, homodimer; probably only forms homodimers in testis. Heterodimer; heterodimerizes with RFX1 and RFX3.

It is found in the nucleus. It localises to the cytoplasm. Transcription factor that acts as a key regulator of spermatogenesis. Acts by regulating expression of genes required for the haploid phase during spermiogenesis, such as genes required for cilium assembly and function. Recognizes and binds the X-box, a regulatory motif with DNA sequence 5'-GTNRCC(0-3N)RGYAAC-3' present on promoters. Probably activates transcription of the testis-specific histone gene H1-6. The chain is DNA-binding protein RFX2 (RFX2) from Pongo abelii (Sumatran orangutan).